Consider the following 1985-residue polypeptide: Histone-lysine N-methyltransferase SETD1B (1985 aa).

Residues 1 to 11 show a composition bias toward basic residues; the sequence is MENSHPHHHHQ. The interval 1–25 is disordered; that stretch reads MENSHPHHHHQQPPPQPGPSGERRN. Residues 67-97 form an interaction with WDR82 region; that stretch reads VEDPRVVGIWTKNKELELSVPKFKIDEFYVG. In terms of domain architecture, RRM spans 92–180; that stretch reads DEFYVGPVPP…NIIHVELDTK (89 aa). Disordered regions lie at residues 234–304, 353–710, 955–1480, 1519–1624, and 1658–1687; these read GCGS…QDPT, GSSG…PPPA, VKRK…RTGP, QLPP…STKL, and RGPW…PQPL. 4 stretches are compositionally biased toward polar residues: residues 242–258, 264–273, 281–304, and 353–365; these read VTPN…TAYS, TPNSYGQGTP, PFSQ…QDPT, and GSSG…QSQD. The segment covering 366–381 has biased composition (low complexity); the sequence is ATTFAHTPPPAQTATA. Pro residues-rich tracts occupy residues 393–404, 423–433, and 440–449; these read TPAPPFPPPPEE, PAPPPLPPAEP, and GTPPGPPPPD. Positions 484-512 are enriched in basic and acidic residues; that stretch reads EKPHDSLDSRIEMLLKEQRTKLPFLREQD. Residues 522-535 show a composition bias toward low complexity; it reads SPISSSSSQLSPLS. Pro residues predominate over residues 583-594; sequence PRPPPEPGPPDP. A compositionally biased stretch (acidic residues) spans 628-637; sequence EDMEISDDEM. Low complexity predominate over residues 650-669; that stretch reads PMVVTPGAGAVAAPNVLAPN. Pro residues predominate over residues 670–710; it reads LPLPPPPGFPPLPPPPPPPPPQPGFPMPPPLPPPPPPPPPA. Phosphoserine is present on residues Ser977 and Ser985. A compositionally biased stretch (basic and acidic residues) spans 986–1006; the sequence is ERERDRDIADAPCELTKRDPK. A Phosphoserine modification is found at Ser1022. A compositionally biased stretch (low complexity) spans 1032 to 1055; the sequence is LSASSSSSASSSSGSSTTSPSSSA. Acidic residues predominate over residues 1058–1083; the sequence is KEEEDRESTEEEEEEEEEEAEEEEEE. Residues 1087–1097 show a composition bias toward low complexity; that stretch reads SRISSPSSSSS. Residues 1100-1120 show a composition bias toward acidic residues; the sequence is KDDEDDNEADSDGQIDSDIDD. Low complexity predominate over residues 1143–1178; that stretch reads SITTSKAPAESSSSSSESSGSSEFESSSESESSSSS. Over residues 1179 to 1202 the composition is skewed to acidic residues; that stretch reads SEDEEEMTVPGVEEEEEEEEEEEK. A compositionally biased stretch (low complexity) spans 1205 to 1217; it reads AMAAATVVAMAEE. Residues 1247-1261 are compositionally biased toward acidic residues; that stretch reads GTEEEVDIEAEDEVP. Ser1283, Ser1301, and Ser1354 each carry phosphoserine. Residues 1331-1373 show a composition bias toward pro residues; sequence EPPPMLSLPLQPPLPPPRLLRPPSPPPEPETPEPPKPPVPLEP. The span at 1402–1442 shows a compositional bias: low complexity; the sequence is PGGEPPLSGSSSGLSLSSPQVPGSPFSYPSPSPGLSSGGLP. Positions 1535 to 1544 are enriched in basic residues; that stretch reads IKRKPGRPRR. Pro residues-rich tracts occupy residues 1600 to 1619 and 1678 to 1687; these read PAPP…PPPV and SPEPSPPQPL. Ser1678 and Ser1682 each carry phosphoserine. The short motif at 1764–1769 is the WDR5 interaction motif (WIN) element; it reads GCARSE. The segment at 1786–1819 is disordered; sequence SRASTDEPPMDTQGMSIPAQPHASTRAGSERRSE. The short motif at 1817–1822 is the RxxxRR motif element; sequence RSEQRR. Residues 1846 to 1963 enclose the SET domain; that stretch reads KKLKFCKSHI…VNEEITYDYK (118 aa). Residue Tyr1962 coordinates S-adenosyl-L-methionine. Residues 1969 to 1985 enclose the Post-SET domain; the sequence is VKIPCLCGSENCRGTLN.

It belongs to the class V-like SAM-binding methyltransferase superfamily. In terms of assembly, component of the SET1B/COMPASS complex composed of the catalytic subunit SETD1B, WDR5, WDR82, RBBP5, ASH2L/ASH2, CXXC1/CFP1, HCFC1, DPY30 homotrimer and BOD1. Forms a core complex with the evolutionary conserved subcomplex WRAD composed of WDR5, RBBP5, ASH2L/ASH2 and DPY30 subunits; WRAD differentially stimulates the methyltransferase activity. Interacts with HCFC1 and ASH2L/ASH2. Interacts (via the RRM domain) with WDR82. Interacts (via the RRM domain) with hyperphosphorylated C-terminal domain (CTD) of RNA polymerase II large subunit (POLR2A) only in the presence of WDR82. Binds specifically to CTD heptad repeats phosphorylated on 'Ser-5' of each heptad. Interacts with RBM15. Interacts (via WIN motif) with WDR5. As to expression, widely expressed.

The protein localises to the nucleus. The protein resides in the nucleus speckle. It is found in the chromosome. Its subcellular location is the cytoplasm. The enzyme catalyses L-lysyl(4)-[histone H3] + S-adenosyl-L-methionine = N(6)-methyl-L-lysyl(4)-[histone H3] + S-adenosyl-L-homocysteine + H(+). It catalyses the reaction N(6)-methyl-L-lysyl(4)-[histone H3] + S-adenosyl-L-methionine = N(6),N(6)-dimethyl-L-lysyl(4)-[histone H3] + S-adenosyl-L-homocysteine + H(+). The catalysed reaction is N(6),N(6)-dimethyl-L-lysyl(4)-[histone H3] + S-adenosyl-L-methionine = N(6),N(6),N(6)-trimethyl-L-lysyl(4)-[histone H3] + S-adenosyl-L-homocysteine + H(+). Histone methyltransferase that catalyzes methyl group transfer from S-adenosyl-L-methionine to the epsilon-amino group of 'Lys-4' of histone H3 (H3K4) via a non-processive mechanism. Part of chromatin remodeling machinery, forms H3K4me1, H3K4me2 and H3K4me3 methylation marks at active chromatin sites where transcription and DNA repair take place. Plays an essential role in regulating the transcriptional programming of multipotent hematopoietic progenitor cells and lymphoid lineage specification during hematopoiesis. In Mus musculus (Mouse), this protein is Histone-lysine N-methyltransferase SETD1B (Setd1b).